The primary structure comprises 441 residues: Transcription factor TOXE (441 aa).

The basic DNA-binding region stretch occupies residues Thr14–Lys40. The tract at residues Phe209–Ser243 is disordered. Over residues Asn212–Pro221 the composition is skewed to basic and acidic residues. Residues Cys228 to Asn241 are compositionally biased toward polar residues. ANK repeat units lie at residues Asp289 to Ile318, Ser322 to Ala351, Glu355 to Glu384, and Glu413 to Val440.

It belongs to the bZIP family. As to quaternary structure, monomer.

Its subcellular location is the nucleus. In terms of biological role, transcription factor, part of the diffuse TOX2 gene cluster that mediates the biosynthesis of the HC-toxin, cyclic tetrapeptide of structure cyclo(D-Pro-L-Ala-D-Ala-L-Aeo), where Aeo stands for 2-amino-9,10-epoxi-8-oxodecanoic acid. HC-toxin is a determinant of specificity and virulence in the interaction between the producing fungus and its host, maize. TOXE is a pathway-specific transcription factor which coordinates the expression of genes involved in HC-toxin biosynthesis. Binds to the tox-box, a 10-bp motif with the consensus 5'-ATCTCNCGNA-3', which is found in the promoter of all genes involved in HC-toxin biosynthesis. Required for pathogenicity of the fungus on maize. This chain is Transcription factor TOXE, found in Cochliobolus carbonum (Maize leaf spot fungus).